The sequence spans 755 residues: Cellulose synthase-like protein B4 (755 aa).

The next 2 helical transmembrane spans lie at 24–44 (AVDLTILGLLLSLLLYRILHV) and 49–69 (TVWIVAFLCETCFTFVWLLIT). Residues Asp136 and Asp461 contribute to the active site. 6 helical membrane-spanning segments follow: residues 533–556 (AYLYVFSWGLRSIPELFYCLLPAY), 569–589 (VYLGIIITLVGIHCLYTLWEF), 615–635 (LFSVLDVILKLLGISKTVFIV), 674–694 (FLPGTFIVLVNLAALAGCLVG), 702–722 (GSGLAEACGCILVVILFLPFL), and 733–753 (IPFSTLSKAAFLAALFVVLSV).

It belongs to the glycosyltransferase 2 family. Plant cellulose synthase-like B subfamily.

It is found in the golgi apparatus membrane. Functionally, thought to be a Golgi-localized beta-glycan synthase that polymerize the backbones of noncellulosic polysaccharides (hemicelluloses) of plant cell wall. This is Cellulose synthase-like protein B4 (CSLB4) from Arabidopsis thaliana (Mouse-ear cress).